The primary structure comprises 132 residues: Large ribosomal subunit protein uL22c (132 aa).

This sequence belongs to the universal ribosomal protein uL22 family. Part of the 50S ribosomal subunit.

The protein localises to the plastid. Its subcellular location is the chloroplast. Functionally, this protein binds specifically to 23S rRNA. The globular domain of the protein is located near the polypeptide exit tunnel on the outside of the subunit, while an extended beta-hairpin is found that lines the wall of the exit tunnel in the center of the 70S ribosome. This Staurastrum punctulatum (Green alga) protein is Large ribosomal subunit protein uL22c (rpl22).